Here is a 201-residue protein sequence, read N- to C-terminus: MKLLHIDSSIAGVGSVTRELSAEIVALLKGADKSWNVIYRDLVAEPLSHLTGGYLAALQGAPADQAVQADVGAGLAVMEDFLAADVIVIGAPMYNFGVPSQLKAWIDRLAVPGKTFSYGEHGPVGLCKGKKVIVASARGGIFSAGSPLAALDHQENYLLSFFGFLGIAEISFVRAEGVALGPVVRAKAIAAAKEHAAKLAA.

Residues S9 and 93 to 96 (MYNF) contribute to the FMN site.

This sequence belongs to the azoreductase type 1 family. As to quaternary structure, homodimer. FMN serves as cofactor.

It catalyses the reaction 2 a quinone + NADH + H(+) = 2 a 1,4-benzosemiquinone + NAD(+). It carries out the reaction N,N-dimethyl-1,4-phenylenediamine + anthranilate + 2 NAD(+) = 2-(4-dimethylaminophenyl)diazenylbenzoate + 2 NADH + 2 H(+). Functionally, quinone reductase that provides resistance to thiol-specific stress caused by electrophilic quinones. Its function is as follows. Also exhibits azoreductase activity. Catalyzes the reductive cleavage of the azo bond in aromatic azo compounds to the corresponding amines. The protein is FMN-dependent NADH:quinone oxidoreductase of Bradyrhizobium sp. (strain BTAi1 / ATCC BAA-1182).